Reading from the N-terminus, the 423-residue chain is Protein MANNAN SYNTHESIS-RELATED 2 (423 aa).

The Cytoplasmic portion of the chain corresponds to 1-6 (MGVDLR). A helical; Signal-anchor for type II membrane protein membrane pass occupies residues 7-26 (QVVAGILTITMFVMLGQMLH). Residues 27 to 423 (RDYFDAVQEK…KNHLAYSCFC (397 aa)) lie on the Lumenal side of the membrane. Position 264–266 (264–266 (DLR)) interacts with substrate.

It belongs to the glycosyltransferase GT106 family. Widely expressed.

Its subcellular location is the golgi apparatus membrane. It participates in glycan biosynthesis. Glycosyltransferase involved in mannan biosynthesis. The chain is Protein MANNAN SYNTHESIS-RELATED 2 from Arabidopsis thaliana (Mouse-ear cress).